The sequence spans 35 residues: Photosystem II reaction center protein T (35 aa).

Residues 3–23 (ALVYTFLLVSTLGIIFFAIFF) traverse the membrane as a helical segment.

It belongs to the PsbT family. PSII is composed of 1 copy each of membrane proteins PsbA, PsbB, PsbC, PsbD, PsbE, PsbF, PsbH, PsbI, PsbJ, PsbK, PsbL, PsbM, PsbT, PsbY, PsbZ, Psb30/Ycf12, at least 3 peripheral proteins of the oxygen-evolving complex and a large number of cofactors. It forms dimeric complexes.

It localises to the plastid. It is found in the chloroplast thylakoid membrane. Functionally, found at the monomer-monomer interface of the photosystem II (PS II) dimer, plays a role in assembly and dimerization of PSII. PSII is a light-driven water plastoquinone oxidoreductase, using light energy to abstract electrons from H(2)O, generating a proton gradient subsequently used for ATP formation. This Stangeria eriopus (Natal grass cycad) protein is Photosystem II reaction center protein T.